Consider the following 178-residue polypeptide: Prion-like protein doppel (178 aa).

The first 25 residues, 1 to 25, serve as a signal peptide directing secretion; sequence MRKHLGGCWLAIVCVLLFSQLSSVK. A flexible tail region spans residues 27 to 50; the sequence is RGIKHRIKWNRKVLPSTSQVTEAH. Residues 51–154 are globular; that stretch reads TAEIRPGAFI…KHCDFWLERG (104 aa). 2 disulfide bridges follow: cysteine 94/cysteine 147 and cysteine 108/cysteine 142. Residues asparagine 98 and asparagine 110 are each glycosylated (N-linked (GlcNAc...) asparagine). Residues 124–141 form a cu(2+) binding region; that stretch reads KQDNKLYQRVLWQLIREL. Glycine 154 is lipidated: GPI-anchor amidated glycine. The propeptide at 155–178 is removed in mature form; that stretch reads AGLQVTLDQPMMLCLLVFIWFIVK.

The protein belongs to the prion family. N-glycosylated. Post-translationally, O-glycosylated. In terms of tissue distribution, strongly expressed in testis. Detected at low levels in lymph node, spleen and ovary.

The protein localises to the cell membrane. Functionally, required for normal acrosome reaction and for normal male fertility. Can bind Cu(2+). The protein is Prion-like protein doppel (PRND) of Ovis aries (Sheep).